A 378-amino-acid chain; its full sequence is Filamin-binding LIM protein 1 (378 aa).

The tract at residues 1–69 (MASKPEKRVA…RSWMPPGRAA (69 aa)) is filamin-binding. The tract at residues 38-179 (WPGRPWESAP…PPPEEPVSFP (142 aa)) is disordered. Residues 103–115 (LPPPPPPPAADLP) show a composition bias toward pro residues. 3 consecutive LIM zinc-binding domains span residues 186 to 247 (DICA…TLEK), 248 to 305 (CGKC…RKFA), and 306 to 375 (PVCS…RSAA). The tract at residues 281–378 (IGDESFALDS…HVKRSAAGCC (98 aa)) is PLEKHC1-binding.

As to quaternary structure, interacts with PLEKHC1, FLNA, FLNB and FLNC. Interacts with NKX2-5.

The protein localises to the cell junction. It localises to the focal adhesion. Its subcellular location is the cytoplasm. The protein resides in the cytoskeleton. It is found in the stress fiber. In terms of biological role, serves as an anchoring site for cell-ECM adhesion proteins and filamin-containing actin filaments. Is implicated in cell shape modulation (spreading) and motility. May participate in the regulation of filamin-mediated cross-linking and stabilization of actin filaments. May also regulate the assembly of filamin-containing signaling complexes that control actin assembly. Promotes dissociation of FLNA from ITGB3 and ITGB7. Promotes activation of integrins and regulates integrin-mediated cell-cell adhesion. The polypeptide is Filamin-binding LIM protein 1 (FBLIM1) (Bos taurus (Bovine)).